Reading from the N-terminus, the 201-residue chain is FMN-dependent NADH:quinone oxidoreductase (201 aa).

Residues S9 and 16-18 (SYS) each bind FMN.

It belongs to the azoreductase type 1 family. In terms of assembly, homodimer. FMN is required as a cofactor.

It carries out the reaction 2 a quinone + NADH + H(+) = 2 a 1,4-benzosemiquinone + NAD(+). It catalyses the reaction N,N-dimethyl-1,4-phenylenediamine + anthranilate + 2 NAD(+) = 2-(4-dimethylaminophenyl)diazenylbenzoate + 2 NADH + 2 H(+). Quinone reductase that provides resistance to thiol-specific stress caused by electrophilic quinones. In terms of biological role, also exhibits azoreductase activity. Catalyzes the reductive cleavage of the azo bond in aromatic azo compounds to the corresponding amines. The chain is FMN-dependent NADH:quinone oxidoreductase from Mesomycoplasma hyopneumoniae (strain 232) (Mycoplasma hyopneumoniae).